The following is a 336-amino-acid chain: Holliday junction branch migration complex subunit RuvB (336 aa).

The segment at 4-184 (ADRLIQPQVI…FGIPLRLEFY (181 aa)) is large ATPase domain (RuvB-L). Residues arginine 24, glycine 65, lysine 68, threonine 69, threonine 70, 131 to 133 (EDY), arginine 174, tyrosine 184, and arginine 221 contribute to the ATP site. Position 69 (threonine 69) interacts with Mg(2+). The tract at residues 185–255 (NIKDLSTIVI…VAELALDMLD (71 aa)) is small ATPAse domain (RuvB-S). A head domain (RuvB-H) region spans residues 258–336 (AEGFDYMDRK…HFNLIQPEAK (79 aa)). 3 residues coordinate DNA: arginine 294, arginine 313, and arginine 318.

It belongs to the RuvB family. In terms of assembly, homohexamer. Forms an RuvA(8)-RuvB(12)-Holliday junction (HJ) complex. HJ DNA is sandwiched between 2 RuvA tetramers; dsDNA enters through RuvA and exits via RuvB. An RuvB hexamer assembles on each DNA strand where it exits the tetramer. Each RuvB hexamer is contacted by two RuvA subunits (via domain III) on 2 adjacent RuvB subunits; this complex drives branch migration. In the full resolvosome a probable DNA-RuvA(4)-RuvB(12)-RuvC(2) complex forms which resolves the HJ.

It localises to the cytoplasm. It catalyses the reaction ATP + H2O = ADP + phosphate + H(+). Functionally, the RuvA-RuvB-RuvC complex processes Holliday junction (HJ) DNA during genetic recombination and DNA repair, while the RuvA-RuvB complex plays an important role in the rescue of blocked DNA replication forks via replication fork reversal (RFR). RuvA specifically binds to HJ cruciform DNA, conferring on it an open structure. The RuvB hexamer acts as an ATP-dependent pump, pulling dsDNA into and through the RuvAB complex. RuvB forms 2 homohexamers on either side of HJ DNA bound by 1 or 2 RuvA tetramers; 4 subunits per hexamer contact DNA at a time. Coordinated motions by a converter formed by DNA-disengaged RuvB subunits stimulates ATP hydrolysis and nucleotide exchange. Immobilization of the converter enables RuvB to convert the ATP-contained energy into a lever motion, pulling 2 nucleotides of DNA out of the RuvA tetramer per ATP hydrolyzed, thus driving DNA branch migration. The RuvB motors rotate together with the DNA substrate, which together with the progressing nucleotide cycle form the mechanistic basis for DNA recombination by continuous HJ branch migration. Branch migration allows RuvC to scan DNA until it finds its consensus sequence, where it cleaves and resolves cruciform DNA. The protein is Holliday junction branch migration complex subunit RuvB of Shewanella piezotolerans (strain WP3 / JCM 13877).